The following is a 484-amino-acid chain: Putative cysteine ligase BshC (484 aa).

Residues 372 to 435 (RAFRDRVEGL…AARDEVLARH (64 aa)) are a coiled coil.

Belongs to the BshC family.

This chain is Putative cysteine ligase BshC, found in Thermus thermophilus (strain ATCC 27634 / DSM 579 / HB8).